Reading from the N-terminus, the 308-residue chain is tRNA pseudouridine synthase B (308 aa).

D44 functions as the Nucleophile in the catalytic mechanism.

The protein belongs to the pseudouridine synthase TruB family. Type 1 subfamily.

It catalyses the reaction uridine(55) in tRNA = pseudouridine(55) in tRNA. Responsible for synthesis of pseudouridine from uracil-55 in the psi GC loop of transfer RNAs. This Nitratidesulfovibrio vulgaris (strain DSM 19637 / Miyazaki F) (Desulfovibrio vulgaris) protein is tRNA pseudouridine synthase B.